The sequence spans 160 residues: Ribosomal RNA large subunit methyltransferase H (160 aa).

Residues glycine 108 and 127 to 132 each bind S-adenosyl-L-methionine; that span reads FGLMTW.

This sequence belongs to the RNA methyltransferase RlmH family. As to quaternary structure, homodimer.

It is found in the cytoplasm. It carries out the reaction pseudouridine(1915) in 23S rRNA + S-adenosyl-L-methionine = N(3)-methylpseudouridine(1915) in 23S rRNA + S-adenosyl-L-homocysteine + H(+). Specifically methylates the pseudouridine at position 1915 (m3Psi1915) in 23S rRNA. This chain is Ribosomal RNA large subunit methyltransferase H, found in Bartonella bacilliformis (strain ATCC 35685 / KC583 / Herrer 020/F12,63).